We begin with the raw amino-acid sequence, 388 residues long: Chorismate synthase (388 aa).

NADP(+) is bound by residues R39 and R45. FMN contacts are provided by residues 132–134, 251–252, G296, 311–315, and R337; these read RSS, NA, and KPIPT.

In terms of assembly, homotetramer. FMNH2 is required as a cofactor.

It catalyses the reaction 5-O-(1-carboxyvinyl)-3-phosphoshikimate = chorismate + phosphate. The protein operates within metabolic intermediate biosynthesis; chorismate biosynthesis; chorismate from D-erythrose 4-phosphate and phosphoenolpyruvate: step 7/7. Functionally, catalyzes the anti-1,4-elimination of the C-3 phosphate and the C-6 proR hydrogen from 5-enolpyruvylshikimate-3-phosphate (EPSP) to yield chorismate, which is the branch point compound that serves as the starting substrate for the three terminal pathways of aromatic amino acid biosynthesis. This reaction introduces a second double bond into the aromatic ring system. The sequence is that of Chorismate synthase from Staphylococcus aureus.